We begin with the raw amino-acid sequence, 334 residues long: MQDFLKGLPKAELHLHIEGSLEPELMFEIGRRNGVALPFANVEEVRAAYEFNNLQEFLDIYYQGAQVLLHEQDFYDMTFAYLQRCREQNVIHAEMFFDPQTHTDRGVDIGVVIRGLTRAMEDAEIQWGQSSKLILCFLRHLSEDAAIETLRQALPYKQHFVGVGLDSSEVGHPPEKFQRVFEQAQNAGLLTVAHAGEEGPPEYIWQALDLLKVKRIDHGVRCIEDAALMQRLIDEQIPLTVCPLSNIKLCVFDSMSEHNILRLLEKGLKVTVNSDDPAYFGGYMNENFIAMQEALPMSKEQAAQLARNSFEASFLTSEEKARLLARLDQYLQNH.

The Zn(2+) site is built by histidine 14, histidine 16, and histidine 194. Glutamate 197 (proton donor) is an active-site residue. Position 275 (aspartate 275) interacts with Zn(2+). Substrate is bound at residue aspartate 276.

It belongs to the metallo-dependent hydrolases superfamily. Adenosine and AMP deaminases family. Adenine deaminase type 2 subfamily. Zn(2+) is required as a cofactor.

It catalyses the reaction adenine + H2O + H(+) = hypoxanthine + NH4(+). Catalyzes the hydrolytic deamination of adenine to hypoxanthine. Plays an important role in the purine salvage pathway and in nitrogen catabolism. The polypeptide is Adenine deaminase (Hahella chejuensis (strain KCTC 2396)).